An 83-amino-acid polypeptide reads, in one-letter code: Large ribosomal subunit protein eL14 (83 aa).

Belongs to the eukaryotic ribosomal protein eL14 family. As to quaternary structure, part of the 50S ribosomal subunit.

The sequence is that of Large ribosomal subunit protein eL14 from Thermococcus kodakarensis (strain ATCC BAA-918 / JCM 12380 / KOD1) (Pyrococcus kodakaraensis (strain KOD1)).